Here is a 940-residue protein sequence, read N- to C-terminus: Isoleucine--tRNA ligase (940 aa).

The 'HIGH' region signature appears at 58-68 (PYANGSIHIGH). Residue glutamate 564 coordinates L-isoleucyl-5'-AMP. The 'KMSKS' region motif lies at 605–609 (KMSKS). ATP is bound at residue lysine 608. Zn(2+) is bound by residues cysteine 903, cysteine 906, cysteine 923, and cysteine 926.

Belongs to the class-I aminoacyl-tRNA synthetase family. IleS type 1 subfamily. Monomer. Zn(2+) serves as cofactor.

The protein resides in the cytoplasm. It catalyses the reaction tRNA(Ile) + L-isoleucine + ATP = L-isoleucyl-tRNA(Ile) + AMP + diphosphate. Its function is as follows. Catalyzes the attachment of isoleucine to tRNA(Ile). As IleRS can inadvertently accommodate and process structurally similar amino acids such as valine, to avoid such errors it has two additional distinct tRNA(Ile)-dependent editing activities. One activity is designated as 'pretransfer' editing and involves the hydrolysis of activated Val-AMP. The other activity is designated 'posttransfer' editing and involves deacylation of mischarged Val-tRNA(Ile). The polypeptide is Isoleucine--tRNA ligase (Shewanella baltica (strain OS155 / ATCC BAA-1091)).